Consider the following 79-residue polypeptide: Conotoxin Tr6.3 (79 aa).

A signal peptide spans 1-22 (MKLTCVLIISVLFLTASQLITA). A propeptide spanning residues 23–47 (VYSRDKQQYRAARLRDEMRNLKGAR) is cleaved from the precursor. 3 disulfide bridges follow: Cys-49-Cys-62, Cys-56-Cys-67, and Cys-61-Cys-77. Residues Pro-60 and Pro-63 each carry the 4-hydroxyproline modification.

Belongs to the conotoxin O1 superfamily. Expressed by the venom duct.

The protein localises to the secreted. In terms of biological role, ion channel inhibitor that inhibits the increase in intracellular calcium upon depolarization in DRG neurons. In vivo, both intraperitoneal and intracranial injections into mice induce hyperactivity. In Conus terebra (Sea snail), this protein is Conotoxin Tr6.3.